A 563-amino-acid polypeptide reads, in one-letter code: Arginine--tRNA ligase (563 aa).

The short motif at 121–131 is the 'HIGH' region element; sequence PNIAKPFSIGH.

It belongs to the class-I aminoacyl-tRNA synthetase family. In terms of assembly, monomer.

Its subcellular location is the cytoplasm. It carries out the reaction tRNA(Arg) + L-arginine + ATP = L-arginyl-tRNA(Arg) + AMP + diphosphate. The polypeptide is Arginine--tRNA ligase (Streptococcus agalactiae serotype Ia (strain ATCC 27591 / A909 / CDC SS700)).